We begin with the raw amino-acid sequence, 215 residues long: Riboflavin synthase (215 aa).

2 Lumazine-binding repeats span residues 1-96 (MFTG…FGGH) and 97-193 (IVSG…EQFL). 2,4-dihydroxypteridine is bound by residues 4–6 (GII), 47–49 (CLT), 61–66 (DVMSET), 100–102 (GHI), Lys135, 144–146 (SLT), and 158–163 (SIIPHT).

As to quaternary structure, homotrimer.

The catalysed reaction is 2 6,7-dimethyl-8-(1-D-ribityl)lumazine + H(+) = 5-amino-6-(D-ribitylamino)uracil + riboflavin. It participates in cofactor biosynthesis; riboflavin biosynthesis; riboflavin from 2-hydroxy-3-oxobutyl phosphate and 5-amino-6-(D-ribitylamino)uracil: step 2/2. Catalyzes the dismutation of two molecules of 6,7-dimethyl-8-ribityllumazine, resulting in the formation of riboflavin and 5-amino-6-(D-ribitylamino)uracil. The chain is Riboflavin synthase (ribE) from Actinobacillus pleuropneumoniae (Haemophilus pleuropneumoniae).